A 290-amino-acid chain; its full sequence is ADP-ribosylation factor-like protein 13A (290 aa).

GTP contacts are provided by residues 28 to 35, 71 to 75, and 130 to 133; these read GLNNSGKT, DLNGD, and NKQD. Residues 204 to 226 are disordered; the sequence is SKNNTGSGERCSSHSFSTRTGMS.

This sequence belongs to the small GTPase superfamily. Arf family.

The chain is ADP-ribosylation factor-like protein 13A (ARL13A) from Homo sapiens (Human).